Reading from the N-terminus, the 367-residue chain is Apolipoprotein A-V (367 aa).

The N-terminal stretch at 1 to 20 (MVAVLTWALALLSAFATVQT) is a signal peptide. The residue at position 56 (Ser-56) is a Phosphoserine. Residues 71–90 (LGPLSGQGREPPGLPHDPEG) form a disordered region.

It belongs to the apolipoprotein A1/A4/E family. As to quaternary structure, interacts with GPIHBP1. Interacts with SORL1; this interaction leads to APOA5 internalization and sorting either to lysosomes and degradation, or to the trans-Golgi network. In terms of processing, phosphorylated by FAM20C in the extracellular medium.

Its subcellular location is the secreted. The protein resides in the early endosome. The protein localises to the late endosome. It is found in the golgi apparatus. It localises to the trans-Golgi network. Functionally, minor apolipoprotein mainly associated with HDL and to a lesser extent with VLDL. May also be associated with chylomicrons. Important determinant of plasma triglyceride (TG) levels by both being a potent stimulator of apo-CII lipoprotein lipase (LPL) TG hydrolysis and an inhibitor of the hepatic VLDL-TG production rate (without affecting the VLDL-apoB production rate). Activates poorly lecithin:cholesterol acyltransferase (LCAT) and does not enhance efflux of cholesterol from macrophages. Binds heparin. This is Apolipoprotein A-V (APOA5) from Leptonychotes weddellii (Weddell seal).